A 317-amino-acid polypeptide reads, in one-letter code: tRNA(Met) cytidine acetate ligase (317 aa).

ATP is bound by residues 6 to 19, Gly-100, Asn-157, and Arg-182; that span reads IAEYNPFHNGHIYQ.

The protein belongs to the TmcAL family.

The protein resides in the cytoplasm. It catalyses the reaction cytidine(34) in elongator tRNA(Met) + acetate + ATP = N(4)-acetylcytidine(34) in elongator tRNA(Met) + AMP + diphosphate. Functionally, catalyzes the formation of N(4)-acetylcytidine (ac(4)C) at the wobble position of elongator tRNA(Met), using acetate and ATP as substrates. First activates an acetate ion to form acetyladenylate (Ac-AMP) and then transfers the acetyl group to tRNA to form ac(4)C34. In Mesomycoplasma hyopneumoniae (strain 232) (Mycoplasma hyopneumoniae), this protein is tRNA(Met) cytidine acetate ligase.